We begin with the raw amino-acid sequence, 456 residues long: Equilibrative nucleoside transporter 2 (456 aa).

The helical transmembrane segment at 13–33 threads the bilayer; that stretch reads LVGISFFILGLGTLLPWNFFI. N-linked (GlcNAc...) asparagine glycosylation occurs at N56. A run of 5 helical transmembrane segments spans residues 69–89, 98–118, 123–143, 161–181, and 192–212; these read WVTL…SFLY, ILGS…LVKV, GLFF…CAVL, LFLS…LMSL, and LGYF…YLSL. Positions 248-277 are disordered; the sequence is GVPISPQQASPTLDLDPEKEPEPEEPQKPG. S252 is modified (phosphoserine). Residues 263–275 show a composition bias toward basic and acidic residues; the sequence is DPEKEPEPEEPQK. The next 5 helical transmembrane spans lie at 288–308, 323–343, 360–380, 396–416, and 432–452; these read IWLT…VFPA, WGLF…DWLG, LLPL…LCHV, FITF…LTMC, and ALMT…SFLF.

This sequence belongs to the SLC29A/ENT transporter (TC 2.A.57) family.

The protein resides in the apical cell membrane. It is found in the basolateral cell membrane. Its subcellular location is the nucleus membrane. The enzyme catalyses inosine(in) = inosine(out). The catalysed reaction is adenosine(in) = adenosine(out). It carries out the reaction uridine(out) = uridine(in). It catalyses the reaction thymidine(in) = thymidine(out). The enzyme catalyses hypoxanthine(out) = hypoxanthine(in). The catalysed reaction is adenine(out) = adenine(in). It carries out the reaction cytidine(in) = cytidine(out). It catalyses the reaction thymine(out) = thymine(in). The enzyme catalyses uracil(in) = uracil(out). The catalysed reaction is guanine(out) = guanine(in). It carries out the reaction guanosine(in) = guanosine(out). Its function is as follows. Bidirectional uniporter involved in the facilitative transport of nucleosides and nucleobases, and contributes to maintaining their cellular homeostasis. Functions as a Na(+)-independent, passive transporter. Involved in the transport of nucleosides such as inosine, adenosine, uridine, thymidine, cytidine and guanosine. Also able to transport purine nucleobases (hypoxanthine, adenine, guanine) and pyrimidine nucleobases (thymine, uracil). Involved in nucleoside transport at basolateral membrane of kidney cells, allowing liver absorption of nucleoside metabolites. Mediates apical nucleoside uptake into Sertoli cells, thereby regulating the transport of nucleosides in testis across the blood-testis-barrier. Mediates both the influx and efflux of hypoxanthine in skeletal muscle microvascular endothelial cells to control the amount of intracellular hypoxanthine available for xanthine oxidase-mediated ROS production. The polypeptide is Equilibrative nucleoside transporter 2 (Mus musculus (Mouse)).